A 344-amino-acid chain; its full sequence is Methionine import ATP-binding protein MetN (344 aa).

An ABC transporter domain is found at isoleucine 2–isoleucine 241. Glycine 38–serine 45 contributes to the ATP binding site.

It belongs to the ABC transporter superfamily. Methionine importer (TC 3.A.1.24) family. The complex is composed of two ATP-binding proteins (MetN), two transmembrane proteins (MetI) and a solute-binding protein (MetQ).

The protein localises to the cell inner membrane. The enzyme catalyses L-methionine(out) + ATP + H2O = L-methionine(in) + ADP + phosphate + H(+). It catalyses the reaction D-methionine(out) + ATP + H2O = D-methionine(in) + ADP + phosphate + H(+). Part of the ABC transporter complex MetNIQ involved in methionine import. Responsible for energy coupling to the transport system. This chain is Methionine import ATP-binding protein MetN, found in Cupriavidus necator (strain ATCC 17699 / DSM 428 / KCTC 22496 / NCIMB 10442 / H16 / Stanier 337) (Ralstonia eutropha).